Here is a 181-residue protein sequence, read N- to C-terminus: Crossover junction endodeoxyribonuclease RuvC (181 aa).

Active-site residues include D8, E67, and D139. D8, E67, and D139 together coordinate Mg(2+).

This sequence belongs to the RuvC family. Homodimer which binds Holliday junction (HJ) DNA. The HJ becomes 2-fold symmetrical on binding to RuvC with unstacked arms; it has a different conformation from HJ DNA in complex with RuvA. In the full resolvosome a probable DNA-RuvA(4)-RuvB(12)-RuvC(2) complex forms which resolves the HJ. Mg(2+) is required as a cofactor.

Its subcellular location is the cytoplasm. It carries out the reaction Endonucleolytic cleavage at a junction such as a reciprocal single-stranded crossover between two homologous DNA duplexes (Holliday junction).. In terms of biological role, the RuvA-RuvB-RuvC complex processes Holliday junction (HJ) DNA during genetic recombination and DNA repair. Endonuclease that resolves HJ intermediates. Cleaves cruciform DNA by making single-stranded nicks across the HJ at symmetrical positions within the homologous arms, yielding a 5'-phosphate and a 3'-hydroxyl group; requires a central core of homology in the junction. The consensus cleavage sequence is 5'-(A/T)TT(C/G)-3'. Cleavage occurs on the 3'-side of the TT dinucleotide at the point of strand exchange. HJ branch migration catalyzed by RuvA-RuvB allows RuvC to scan DNA until it finds its consensus sequence, where it cleaves and resolves the cruciform DNA. This chain is Crossover junction endodeoxyribonuclease RuvC, found in Acinetobacter baylyi (strain ATCC 33305 / BD413 / ADP1).